A 133-amino-acid chain; its full sequence is U-scoloptoxin(05)-Sa1a (133 aa).

A signal peptide spans 1–24; it reads MPSLCIIALFGTLTFYTLIPSIHT.

It belongs to the scoloptoxin-05 family. Contains 5 disulfide bonds. As to expression, expressed by the venom gland.

Its subcellular location is the secreted. The sequence is that of U-scoloptoxin(05)-Sa1a from Scolopendra alternans (Florida Keys giant centipede).